Reading from the N-terminus, the 403-residue chain is METYAEVGKEGKPSCASVDLQGDSSLQVEISDAVSERDKVKFTVQTKSCLPHFAQTEFSVVRQHEEFIWLHDAYVENEEYAGLIIPPAPPRPDFEASREKLQKLGEGDSSVTREEFAKMKQELEAEYLAIFKKTVAMHEVFLQRLAAHPTLRRDHNFFVFLEYGQDLSVRGKNRKELLGGFLRNIVKSADEALITGMSGLKEVDDFFEHERTFLLEYHTRIRDACLRADRVMRAHKCLADDYIPISAALSSLGTQEVNQLRTSFLKLAELFERLRKLEGRVASDEDLKLSDMLRYYMRDSQAAKDLLYRRLRALADYENANKALDKARTRNREVRPAESHQQLCCQRFERLSDSAKQELMDFKSRRVSSFRKNLIELAELELKHAKASTLILRNTLVALKGEP.

Residues 20 to 168 enclose the PX domain; it reads LQGDSSLQVE…VFLEYGQDLS (149 aa). The stretch at 258-335 forms a coiled coil; the sequence is NQLRTSFLKL…KARTRNREVR (78 aa).

This sequence belongs to the sorting nexin family.

Functionally, may be involved in several stages of intracellular trafficking. The protein is Sorting nexin-32 (SNX32) of Homo sapiens (Human).